The following is a 233-amino-acid chain: Small ribosomal subunit protein uS3 (233 aa).

The KH type-2 domain occupies 39-107; it reads VRQFLTKELS…PAQINTYEIR (69 aa).

This sequence belongs to the universal ribosomal protein uS3 family. In terms of assembly, part of the 30S ribosomal subunit. Forms a tight complex with proteins S10 and S14.

Binds the lower part of the 30S subunit head. Binds mRNA in the 70S ribosome, positioning it for translation. This Hamiltonella defensa subsp. Acyrthosiphon pisum (strain 5AT) protein is Small ribosomal subunit protein uS3.